Reading from the N-terminus, the 64-residue chain is MAVQKSRKTRSRRGMRRSHDALRGAMLSKDPTTGETHLRHHISPEGYYKGRQILTPKESYEDEE.

The segment covering Met-1–Arg-16 has biased composition (basic residues). The tract at residues Met-1–Glu-64 is disordered.

The protein belongs to the bacterial ribosomal protein bL32 family.

This Coxiella burnetii (strain CbuK_Q154) (Coxiella burnetii (strain Q154)) protein is Large ribosomal subunit protein bL32.